Reading from the N-terminus, the 340-residue chain is Thioesterase pkgB (340 aa).

The Zn(2+) site is built by H97, H99, D101, H102, and H205. D101 (proton donor/acceptor) is an active-site residue. The span at 242 to 258 shows a compositional bias: low complexity; it reads SSRNGGSTSSIGSVSES. A disordered region spans residues 242–271; it reads SSRNGGSTSSIGSVSESGDSDEEDNNMKTS.

This sequence belongs to the metallo-beta-lactamase superfamily. It depends on Zn(2+) as a cofactor.

The catalysed reaction is 3,5,7,9,11,13-hexaoxotetradecanoyl-[ACP] = dehydrocitreoisocoumarin + holo-[ACP] + H2O. It catalyses the reaction 3,5,7,9,11-pentaoxododecanoyl-[ACP] = 6,8-dihydroxy-3-(2-oxopropyl)-isocoumarin + holo-[ACP] + H2O. Functionally, thioesterase; part of the pkg gene cluster that mediates the biosynthesis of dihydrocitreoisocoumarin and 6,8-dihydroxy-3-(2-oxopropyl)-isocoumarin. The non-reducing polyketide synthase pkgA performs the condensation of one acetyl-CoA starter unit with 6 and 5 malonyl-CoA units, respectively. As pkgA lacks a releasing domain, the thioesterase pkgB is necessary to break the thioester bond and release dihydrocitreoisocoumarin and 6,8-dihydroxy-3-(2-oxopropyl)-isocoumarin from pkgA. The polypeptide is Thioesterase pkgB (Emericella nidulans (strain FGSC A4 / ATCC 38163 / CBS 112.46 / NRRL 194 / M139) (Aspergillus nidulans)).